A 188-amino-acid polypeptide reads, in one-letter code: MVKSQPILRYILRGIPAIAVAVLLSACSANNTAKNMHPETRAVGSETSSLQASQDEFENLVRNVDVKSRIMDQYADWKGVRYRLGGSTKKGIDCSGFVQRTFREQFGLELPRSTYEQQEMGKSVSRSNLRTGDLVLFRAGSTGRHVGIYIGNNQFVHASTSSGVIISSMNEPYWKKRYNEARRVLSRS.

The N-terminal stretch at 1 to 26 (MVKSQPILRYILRGIPAIAVAVLLSA) is a signal peptide. Cys27 carries the N-palmitoyl cysteine lipid modification. A lipid anchor (S-diacylglycerol cysteine) is attached at Cys27. The NlpC/P60 domain occupies 64 to 185 (VDVKSRIMDQ…KRYNEARRVL (122 aa)). Cys94 acts as the Nucleophile in catalysis. The active-site Proton acceptor is the His145. The active site involves His157.

This sequence belongs to the peptidase C40 family. In terms of assembly, monomer.

The protein localises to the cell outer membrane. It catalyses the reaction N-acetyl-D-glucosaminyl-N-acetylmuramoyl-L-alanyl-meso-2,6-diaminoheptanedioyl-D-alanine + H2O = N-acetyl-D-glucosaminyl-N-acetylmuramoyl-L-alanyl-meso-2,6-diaminoheptanedioate + D-alanine. Its pathway is cell wall biogenesis; cell wall polysaccharide biosynthesis. Functionally, a murein DD-endopeptidase with specificity for D-Ala-meso-diaminopimelic acid (mDAP) cross-links. Its role is probably to cleave D-Ala-mDAP cross-links to allow insertion of new glycans and thus cell wall expansion. Functionally redundant with MepM and MepH. Also has weak LD-carboxypeptidase activity on L-mDAP-D-Ala peptide bonds. The chain is Murein DD-endopeptidase MepS/Murein LD-carboxypeptidase (mepS) from Escherichia coli O157:H7.